Reading from the N-terminus, the 179-residue chain is Large ribosomal subunit protein uL6 (179 aa).

Belongs to the universal ribosomal protein uL6 family. As to quaternary structure, part of the 50S ribosomal subunit.

This protein binds to the 23S rRNA, and is important in its secondary structure. It is located near the subunit interface in the base of the L7/L12 stalk, and near the tRNA binding site of the peptidyltransferase center. This is Large ribosomal subunit protein uL6 from Mycobacterium ulcerans (strain Agy99).